Here is a 256-residue protein sequence, read N- to C-terminus: Acetyl-coenzyme A carboxylase carboxyl transferase subunit alpha (256 aa).

A CoA carboxyltransferase C-terminal domain is found at 1-236; sequence MSDVARILKE…KTAIVDELAE (236 aa).

Belongs to the AccA family. As to quaternary structure, acetyl-CoA carboxylase is a heterohexamer composed of biotin carboxyl carrier protein (AccB), biotin carboxylase (AccC) and two subunits each of ACCase subunit alpha (AccA) and ACCase subunit beta (AccD).

Its subcellular location is the cytoplasm. It catalyses the reaction N(6)-carboxybiotinyl-L-lysyl-[protein] + acetyl-CoA = N(6)-biotinyl-L-lysyl-[protein] + malonyl-CoA. It functions in the pathway lipid metabolism; malonyl-CoA biosynthesis; malonyl-CoA from acetyl-CoA: step 1/1. Component of the acetyl coenzyme A carboxylase (ACC) complex. First, biotin carboxylase catalyzes the carboxylation of biotin on its carrier protein (BCCP) and then the CO(2) group is transferred by the carboxyltransferase to acetyl-CoA to form malonyl-CoA. In Streptococcus thermophilus (strain CNRZ 1066), this protein is Acetyl-coenzyme A carboxylase carboxyl transferase subunit alpha.